The sequence spans 158 residues: Transcription elongation factor GreA (158 aa).

The stretch at 53–73 (EQQSFVEGRIQEIEGKLSNAQ) forms a coiled coil.

It belongs to the GreA/GreB family.

In terms of biological role, necessary for efficient RNA polymerase transcription elongation past template-encoded arresting sites. The arresting sites in DNA have the property of trapping a certain fraction of elongating RNA polymerases that pass through, resulting in locked ternary complexes. Cleavage of the nascent transcript by cleavage factors such as GreA or GreB allows the resumption of elongation from the new 3'terminus. GreA releases sequences of 2 to 3 nucleotides. The protein is Transcription elongation factor GreA of Alkalilimnicola ehrlichii (strain ATCC BAA-1101 / DSM 17681 / MLHE-1).